Reading from the N-terminus, the 539-residue chain is Aluminum-activated malate transporter 13 (539 aa).

A run of 6 helical transmembrane segments spans residues 57-77 (VGVA…FEGV), 80-100 (NALW…GATL), 107-127 (GLGT…AIHS), 130-150 (ILGG…ITYM), 165-185 (LVFL…DTVI), and 192-212 (LYTI…FFPI).

This sequence belongs to the aromatic acid exporter (TC 2.A.85) family.

The protein localises to the membrane. Malate transporter. The polypeptide is Aluminum-activated malate transporter 13 (ALMT13) (Arabidopsis thaliana (Mouse-ear cress)).